The chain runs to 989 residues: Phosphoenolpyruvate carboxylase (989 aa).

Active-site residues include His175 and Lys630.

It belongs to the PEPCase type 1 family. It depends on Mg(2+) as a cofactor.

It catalyses the reaction oxaloacetate + phosphate = phosphoenolpyruvate + hydrogencarbonate. Its function is as follows. Forms oxaloacetate, a four-carbon dicarboxylic acid source for the tricarboxylic acid cycle. The polypeptide is Phosphoenolpyruvate carboxylase (Prochlorococcus marinus (strain MIT 9215)).